Consider the following 223-residue polypeptide: Peptidyl-prolyl cis-trans isomerase, mitochondrial (223 aa).

A mitochondrion-targeting transit peptide spans 1 to 44 (MFGPRHFSVLKTTGSLVSSTFSSSLKPTATFSCARAFSQTSSIM). A PPIase cyclophilin-type domain is found at 62–222 (NKPTSEIKAQ…KKPTIVDCGA (161 aa)).

Belongs to the cyclophilin-type PPIase family.

It is found in the mitochondrion. The protein localises to the cytoplasm. The catalysed reaction is [protein]-peptidylproline (omega=180) = [protein]-peptidylproline (omega=0). Its activity is regulated as follows. Binds cyclosporin A (CsA). CsA mediates some of its effects via an inhibitory action on PPIase. In terms of biological role, PPIases accelerate the folding of proteins. It catalyzes the cis-trans isomerization of proline imidic peptide bonds in oligopeptides. This chain is Peptidyl-prolyl cis-trans isomerase, mitochondrial (csr-1), found in Neurospora crassa (strain ATCC 24698 / 74-OR23-1A / CBS 708.71 / DSM 1257 / FGSC 987).